The primary structure comprises 459 residues: Putrescine aminotransferase (459 aa).

Residues 150-151 and Q274 each bind pyridoxal 5'-phosphate; that span reads GT. K300 is subject to N6-(pyridoxal phosphate)lysine. Residue T332 coordinates pyridoxal 5'-phosphate.

This sequence belongs to the class-III pyridoxal-phosphate-dependent aminotransferase family. Putrescine aminotransferase subfamily. It depends on pyridoxal 5'-phosphate as a cofactor.

It catalyses the reaction an alkane-alpha,omega-diamine + 2-oxoglutarate = an omega-aminoaldehyde + L-glutamate. The enzyme catalyses putrescine + 2-oxoglutarate = 1-pyrroline + L-glutamate + H2O. It carries out the reaction cadaverine + 2-oxoglutarate = 5-aminopentanal + L-glutamate. Its pathway is amine and polyamine degradation; putrescine degradation; 4-aminobutanal from putrescine (transaminase route): step 1/1. Its function is as follows. Catalyzes the aminotransferase reaction from putrescine to 2-oxoglutarate, leading to glutamate and 4-aminobutanal, which spontaneously cyclizes to form 1-pyrroline. This is the first step in one of two pathways for putrescine degradation, where putrescine is converted into 4-aminobutanoate (gamma-aminobutyrate or GABA) via 4-aminobutanal. Also functions as a cadaverine transaminase in a a L-lysine degradation pathway to succinate that proceeds via cadaverine, glutarate and L-2-hydroxyglutarate. This Escherichia coli O17:K52:H18 (strain UMN026 / ExPEC) protein is Putrescine aminotransferase.